Here is a 265-residue protein sequence, read N- to C-terminus: Tryptophan 2,3-dioxygenase (265 aa).

Residues 38–42 (FIVVH) and arginine 104 each bind substrate. Residue histidine 223 participates in heme binding. Residue threonine 237 coordinates substrate.

This sequence belongs to the tryptophan 2,3-dioxygenase family. As to quaternary structure, homotetramer. The cofactor is heme.

It catalyses the reaction L-tryptophan + O2 = N-formyl-L-kynurenine. The protein operates within amino-acid degradation; L-tryptophan degradation via kynurenine pathway; L-kynurenine from L-tryptophan: step 1/2. Functionally, heme-dependent dioxygenase that catalyzes the oxidative cleavage of the L-tryptophan (L-Trp) pyrrole ring and converts L-tryptophan to N-formyl-L-kynurenine. Catalyzes the oxidative cleavage of the indole moiety. The sequence is that of Tryptophan 2,3-dioxygenase from Anaeromyxobacter dehalogenans (strain 2CP-C).